Consider the following 311-residue polypeptide: Methionyl-tRNA formyltransferase (311 aa).

109 to 112 is a binding site for (6S)-5,6,7,8-tetrahydrofolate; it reads SLLP.

This sequence belongs to the Fmt family.

The catalysed reaction is L-methionyl-tRNA(fMet) + (6R)-10-formyltetrahydrofolate = N-formyl-L-methionyl-tRNA(fMet) + (6S)-5,6,7,8-tetrahydrofolate + H(+). Its function is as follows. Attaches a formyl group to the free amino group of methionyl-tRNA(fMet). The formyl group appears to play a dual role in the initiator identity of N-formylmethionyl-tRNA by promoting its recognition by IF2 and preventing the misappropriation of this tRNA by the elongation apparatus. In Moorella thermoacetica (strain ATCC 39073 / JCM 9320), this protein is Methionyl-tRNA formyltransferase.